Consider the following 461-residue polypeptide: MSRQVVRSSKFRHVFGQPAKADQCYEDVRVSQTTWDSGFCAVNPKFMALICEASGGGAFLVLPLGKTGRVDKNVPLVCGHTAPVLDIAWCPHNDNVIASGSEDCTVMVWEIPDGGLVLPLREPVVTLEGHTKRVGIVAWHPTAQNVLLSAGCDNVILVWDVGTGAAVLTLGPDVHPDTIYSVDWSRDGALICTSCRDKRVRVIEPRKGTVVAEKERPHEGTRPVHAVFVSEGKILTTGFSRMSERQVALWDTKHLEEPLSLQELDTSSGVLLPFFDPDTNIVYLCGKGDSSIRYFEITSEAPFLHYLSMFSSKESQRGMGYMPKRGLEVNKCEIARFYKLHERKCEPIAMTVPRKSDLFQEDLYPPTAGPDPALTAEEWLSGRDAGPLLISLKDGYVPPKSRELRVNRGLDSARRRATPEPSSTLSSDTVSRLEEDVRNLNAIVQKLQERLDRLEETVQAK.

N-acetylserine is present on Ser-2. A Phosphoserine; by PKC modification is found at Ser-2. 7 WD repeats span residues 13–63 (HVFG…LVLP), 73–110 (NVPLVCGHTAPVLDIAWCPHNDNVIASGSEDCTVMVWE), 123–160 (PVVTLEGHTKRVGIVAWHPTAQNVLLSAGCDNVILVWD), 164–204 (GAAV…RVIE), 207–251 (KGTV…ALWD), 258–296 (PLSLQELDTSSGVLLPFFDPDTNIVYLCGKGDSSIRYFE), and 302–349 (PFLH…EPIA). Residues 407–418 (NRGLDSARRRAT) show a composition bias toward basic and acidic residues. A disordered region spans residues 407 to 431 (NRGLDSARRRATPEPSSTLSSDTVS). A Phosphoserine; by PKC modification is found at Ser-412. The residue at position 418 (Thr-418) is a Phosphothreonine. Residues 420–430 (EPSSTLSSDTV) show a composition bias toward polar residues. Residue Ser-422 is modified to Phosphoserine. Residues 425–461 (LSSDTVSRLEEDVRNLNAIVQKLQERLDRLEETVQAK) are a coiled coil.

The protein belongs to the WD repeat coronin family. In terms of assembly, binds actin. In terms of processing, phosphorylation at Ser-412 by PKC strongly down-regulates the association with actin. Polyubiquitinated by RNF128 with 'Lys-48'-linked chains, leading to proteasomal degradation.

The protein localises to the cytoplasm. It is found in the cytoskeleton. The protein resides in the cell cortex. Its subcellular location is the cytoplasmic vesicle. It localises to the phagosome membrane. Its function is as follows. May be a crucial component of the cytoskeleton of highly motile cells, functioning both in the invagination of large pieces of plasma membrane, as well as in forming protrusions of the plasma membrane involved in cell locomotion. The chain is Coronin-1A (Coro1a) from Rattus norvegicus (Rat).